Consider the following 152-residue polypeptide: D-erythrulose-4-phosphate isomerase 2 (152 aa).

The active-site Proton acceptor is Cys70.

Belongs to the LacAB/RpiB family.

The catalysed reaction is D-erythrulose 4-phosphate = D-erythrose 4-phosphate. The protein operates within carbohydrate metabolism; erythritol degradation. It functions in the pathway carbohydrate metabolism; D-threitol degradation. Its pathway is carbohydrate metabolism; L-threitol degradation. Catalyzes the isomerization of D-erythrulose-4P to D-erythrose-4P. Involved in the degradation pathways of L-threitol, D-threitol and erythritol, that allow M.smegmatis to grow on these compounds as the sole carbon source. The sequence is that of D-erythrulose-4-phosphate isomerase 2 from Mycolicibacterium smegmatis (strain ATCC 700084 / mc(2)155) (Mycobacterium smegmatis).